Reading from the N-terminus, the 205-residue chain is High frequency lysogenization protein HflD homolog (205 aa).

This sequence belongs to the HflD family.

It is found in the cytoplasm. The protein localises to the cell inner membrane. The chain is High frequency lysogenization protein HflD homolog from Shewanella sp. (strain MR-4).